Here is a 201-residue protein sequence, read N- to C-terminus: Recombination protein RecR (201 aa).

The C4-type zinc finger occupies 57–72 (CADCRTFTEQDVCNIC). One can recognise a Toprim domain in the interval 81-176 (GQICVVESPA…SASRIAHGVP (96 aa)).

The protein belongs to the RecR family.

May play a role in DNA repair. It seems to be involved in an RecBC-independent recombinational process of DNA repair. It may act with RecF and RecO. The protein is Recombination protein RecR of Enterobacter sp. (strain 638).